The chain runs to 493 residues: Glutamate--tRNA ligase (493 aa).

A 'HIGH' region motif is present at residues 10-20 (PSPTGDPHVGT). The 'KMSKS' region signature appears at 251-255 (KLSKR). An ATP-binding site is contributed by Lys-254.

Belongs to the class-I aminoacyl-tRNA synthetase family. Glutamate--tRNA ligase type 1 subfamily. As to quaternary structure, monomer.

Its subcellular location is the cytoplasm. The catalysed reaction is tRNA(Glu) + L-glutamate + ATP = L-glutamyl-tRNA(Glu) + AMP + diphosphate. Functionally, catalyzes the attachment of glutamate to tRNA(Glu) in a two-step reaction: glutamate is first activated by ATP to form Glu-AMP and then transferred to the acceptor end of tRNA(Glu). The polypeptide is Glutamate--tRNA ligase (Pseudomonas savastanoi pv. phaseolicola (strain 1448A / Race 6) (Pseudomonas syringae pv. phaseolicola (strain 1448A / Race 6))).